We begin with the raw amino-acid sequence, 300 residues long: uncharacterized protein (300 aa).

A signal peptide spans 1–19; the sequence is MKLKLLLIPLLGSSLLLSA. Residue Cys20 is the site of N-palmitoyl cysteine attachment. Cys20 carries the S-diacylglycerol cysteine lipid modification.

This sequence belongs to the MG439/MG440 family.

The protein resides in the cell membrane. This is an uncharacterized protein from Mycoplasma pneumoniae (strain ATCC 29342 / M129 / Subtype 1) (Mycoplasmoides pneumoniae).